We begin with the raw amino-acid sequence, 369 residues long: Anhydro-N-acetylmuramic acid kinase (369 aa).

12–19 (GTSLDGVD) is an ATP binding site.

The protein belongs to the anhydro-N-acetylmuramic acid kinase family.

The enzyme catalyses 1,6-anhydro-N-acetyl-beta-muramate + ATP + H2O = N-acetyl-D-muramate 6-phosphate + ADP + H(+). It participates in amino-sugar metabolism; 1,6-anhydro-N-acetylmuramate degradation. It functions in the pathway cell wall biogenesis; peptidoglycan recycling. In terms of biological role, catalyzes the specific phosphorylation of 1,6-anhydro-N-acetylmuramic acid (anhMurNAc) with the simultaneous cleavage of the 1,6-anhydro ring, generating MurNAc-6-P. Is required for the utilization of anhMurNAc either imported from the medium or derived from its own cell wall murein, and thus plays a role in cell wall recycling. The protein is Anhydro-N-acetylmuramic acid kinase of Actinobacillus pleuropneumoniae serotype 7 (strain AP76).